We begin with the raw amino-acid sequence, 334 residues long: Ornithine carbamoyltransferase (334 aa).

Carbamoyl phosphate is bound by residues 57–60 (STRT), Gln84, Arg108, and 135–138 (HPTQ). L-ornithine-binding positions include Asn169, Asp233, and 237–238 (SM). Residues 275–276 (CL) and Arg320 each bind carbamoyl phosphate.

Belongs to the aspartate/ornithine carbamoyltransferase superfamily. OTCase family.

It is found in the cytoplasm. The catalysed reaction is carbamoyl phosphate + L-ornithine = L-citrulline + phosphate + H(+). Its pathway is amino-acid biosynthesis; L-arginine biosynthesis; L-arginine from L-ornithine and carbamoyl phosphate: step 1/3. Its function is as follows. Reversibly catalyzes the transfer of the carbamoyl group from carbamoyl phosphate (CP) to the N(epsilon) atom of ornithine (ORN) to produce L-citrulline. This Vibrio cholerae serotype O1 (strain ATCC 39315 / El Tor Inaba N16961) protein is Ornithine carbamoyltransferase.